We begin with the raw amino-acid sequence, 840 residues long: Lon protease homolog 2, peroxisomal (840 aa).

One can recognise a Lon N-terminal domain in the interval 13 to 222 (LPLLCTHDGV…KALPLLTRQI (210 aa)). 375–382 (GPPGVGKT) is an ATP binding site. The disordered stretch occupies residues 583–606 (QKVSRSEAPTEQHAEQNTDSKVED). Positions 584 to 606 (KVSRSEAPTEQHAEQNTDSKVED) are enriched in basic and acidic residues. Residues 641–825 (LTLPGVAIGL…DEVLNAAFDG (185 aa)) form the Lon proteolytic domain. Active-site residues include Ser-731 and Lys-774. A Microbody targeting signal motif is present at residues 838–840 (SKL).

Belongs to the peptidase S16 family.

Its subcellular location is the peroxisome matrix. It catalyses the reaction Hydrolysis of proteins in presence of ATP.. Its function is as follows. ATP-dependent serine protease that mediates the selective degradation of misfolded and unassembled polypeptides in the peroxisomal matrix. Necessary for type 2 peroxisome targeting signal (PTS2)-containing protein processing and facilitates peroxisome matrix protein import. This is Lon protease homolog 2, peroxisomal (lonp2) from Danio rerio (Zebrafish).